A 363-amino-acid chain; its full sequence is Diheme-cytochrome-encapsulin shell fusion protein (363 aa).

Residues 1-36 form the signal peptide; sequence MVMGILNTFKKVYAVTGFFALLAVFSLSQVGSSAFA. A diheme c-type cytochrome region spans residues 37–74; it reads ACAKVDDCFSCHTTQELNAVHKNTPYQGQSCIVCHKAF. Heme is bound by residues Cys44, Cys47, His48, Cys67, Cys70, and His71. The linker stretch occupies residues 75 to 94; that stretch reads AADDTCSDAKDGRFAKISSE. The tract at residues 95–363 is encapsulin domain; it reads ININKEDWNK…KCPQAICTLE (269 aa).

The protein belongs to the encapsulin family. Family 1 subfamily. In terms of assembly, the encapsulin nanocompartment is probably formed by 180 monomers, with the N-terminus (diheme domain) inside. There are 36 pores where the pentamers meet as well as 3-fold axis channels and dimer channels. Requires heme as cofactor.

It localises to the encapsulin nanocompartment. Fusion of the shell and cargo protein of a type 1 encapsulin nanocompartment. Protein missing its signal peptide makes 33 nm particles in E.coli (called cEnc), protein missing its signal peptide and diheme domain (residues 1-86, called Enc) makes 29 nm particles. The cEnc nancompartment encloses c-type heme. The cargo protein NIR-HAO (AC P0DV45) is probably targeted to the nanocompartment by its association with the diheme domain in cEnc; removal of the diheme domain in Enc halves the amount of cargo. This Kuenenia stuttgartiensis protein is Diheme-cytochrome-encapsulin shell fusion protein.